The chain runs to 207 residues: Thiamine-phosphate synthase (207 aa).

4-amino-2-methyl-5-(diphosphooxymethyl)pyrimidine contacts are provided by residues 36-40 and Asn68; that span reads QLRMK. Asp69 and Asp88 together coordinate Mg(2+). Position 106 (Ser106) interacts with 4-amino-2-methyl-5-(diphosphooxymethyl)pyrimidine. 132-134 is a 2-[(2R,5Z)-2-carboxy-4-methylthiazol-5(2H)-ylidene]ethyl phosphate binding site; sequence TNT. Lys135 contributes to the 4-amino-2-methyl-5-(diphosphooxymethyl)pyrimidine binding site. Residues Gly162 and 182–183 each bind 2-[(2R,5Z)-2-carboxy-4-methylthiazol-5(2H)-ylidene]ethyl phosphate; that span reads VS.

The protein belongs to the thiamine-phosphate synthase family. The cofactor is Mg(2+).

It carries out the reaction 2-[(2R,5Z)-2-carboxy-4-methylthiazol-5(2H)-ylidene]ethyl phosphate + 4-amino-2-methyl-5-(diphosphooxymethyl)pyrimidine + 2 H(+) = thiamine phosphate + CO2 + diphosphate. The enzyme catalyses 2-(2-carboxy-4-methylthiazol-5-yl)ethyl phosphate + 4-amino-2-methyl-5-(diphosphooxymethyl)pyrimidine + 2 H(+) = thiamine phosphate + CO2 + diphosphate. It catalyses the reaction 4-methyl-5-(2-phosphooxyethyl)-thiazole + 4-amino-2-methyl-5-(diphosphooxymethyl)pyrimidine + H(+) = thiamine phosphate + diphosphate. Its pathway is cofactor biosynthesis; thiamine diphosphate biosynthesis; thiamine phosphate from 4-amino-2-methyl-5-diphosphomethylpyrimidine and 4-methyl-5-(2-phosphoethyl)-thiazole: step 1/1. Functionally, condenses 4-methyl-5-(beta-hydroxyethyl)thiazole monophosphate (THZ-P) and 2-methyl-4-amino-5-hydroxymethyl pyrimidine pyrophosphate (HMP-PP) to form thiamine monophosphate (TMP). This Methanococcus maripaludis (strain C5 / ATCC BAA-1333) protein is Thiamine-phosphate synthase.